Consider the following 224-residue polypeptide: DNA repair and recombination protein RadB (224 aa).

Belongs to the eukaryotic RecA-like protein family. RadB subfamily.

In terms of biological role, involved in DNA repair and in homologous recombination. May regulate the cleavage reactions of the branch-structured DNA. Has a very weak ATPase activity that is not stimulated by DNA. Binds DNA but does not promote DNA strands exchange. The polypeptide is DNA repair and recombination protein RadB (Methanoculleus marisnigri (strain ATCC 35101 / DSM 1498 / JR1)).